Here is a 477-residue protein sequence, read N- to C-terminus: MAENTVYFPEAFLAQMRAAMPAHLSFDDFIAACQRPLRRSIRVNTLKISVADFLSLVAPYGWQLTPVPWCEEGFWIERDGDDALPLGSTAEHLSGLFYIQEASSMLPVAALFADNPQPERVMDVAAAPGSKTTQIAARMGNAGGILANEFSASRVKVLHANISRCGISNVALTHFDGRVFGAALPEAFDAILLDAPCSGEGVVRKDADALKNWSPESNLDIAATQRELIDSAFHALRPGGTLVYSTCTLNREENQSVVQWLLSRYPQAVEILPLGDLFSGAADALTAEGFLHVFPQIYDCEGFFVARLRKTAAIDPLPAPGYKVGKFPFTPLKSREAAAVTAAANAVGLAWDAGHTLWQRDKELWLFPQAMEPLFGQVRFSRIGVRLAEVHNKGYRWQHEAVIAFAAPQRAFELTQEEAEEWYRGRDVYPQTAPQQDEAIVTFQGVPLGLAKRVGSRLKNSYPRELVRDGKLFAGKV.

Residues 125–131 (AAAPGSK), E149, D176, and D194 contribute to the S-adenosyl-L-methionine site. The Nucleophile role is filled by C247.

This sequence belongs to the class I-like SAM-binding methyltransferase superfamily. RsmB/NOP family.

Its subcellular location is the cytoplasm. It catalyses the reaction cytidine(1407) in 16S rRNA + S-adenosyl-L-methionine = 5-methylcytidine(1407) in 16S rRNA + S-adenosyl-L-homocysteine + H(+). In terms of biological role, specifically methylates the cytosine at position 1407 (m5C1407) of 16S rRNA. The chain is Ribosomal RNA small subunit methyltransferase F from Klebsiella pneumoniae (strain 342).